The primary structure comprises 395 residues: MLLERVRAGSEKAAELCPFPRSPEIPLCAGCNQHIVDRFILKVLDRHWHSKCLKCSDCQTQLAEKCFSRGDGVYCKEDFFKRFGTKCAACQQGIPPTQVVRRAQDFVYHLHCFACIVCKRQLATGDEFYLMEDSRLVCKADYETAKQREAESTAKRPRTTITAKQLETLKNAYNNSPKPARHVREQLSSETGLDMRVVQVWFQNRRAKEKRLKKDAGRQRWGQYFRNMKRSRGTSKSDKDSIQEEGPDSDAEVSFTDEPSMSEMSHSNGIYSNLSEASPALGRQAGTNGGFSLDHSGIPAQDQYHDLRSNSPYGIPQSPASLQALPGHQPLISSLVYPDSGLGIMGQGGQGVPQSMRVLAGNGPSSDLSTGSSGGYPDFPASPASWLDEVDHAQF.

LIM zinc-binding domains are found at residues 28-78 (CAGC…CKED) and 87-141 (CAAC…CKAD). The homeobox DNA-binding region spans 154 to 213 (AKRPRTTITAKQLETLKNAYNNSPKPARHVREQLSSETGLDMRVVQVWFQNRRAKEKRLK). Disordered regions lie at residues 209 to 325 (EKRL…LQAL) and 348 to 395 (GGQG…HAQF). The segment covering 257–276 (DEPSMSEMSHSNGIYSNLSE) has biased composition (polar residues).

The protein localises to the nucleus. In terms of biological role, transcription factor. Defines subclasses of motoneurons that segregate into columns in the spinal cord and select distinct axon pathways. Acts in conjunction with LIM-1, ISL-1 and ISL-2. This chain is LIM/homeobox protein Lhx3 (LHX3), found in Gallus gallus (Chicken).